The sequence spans 411 residues: Peptidyl-prolyl cis-trans isomerase (411 aa).

The residue at position 2 (serine 2) is an N-acetylserine. 2 disordered regions span residues 54-127 and 160-302; these read IIKR…TLSP and NYVK…PKSK. Positions 61–87 are enriched in acidic residues; that stretch reads FEDDDFLGGDFDEDEIDEESSEEEEEE. A phosphoserine mark is found at serine 80 and serine 81. Residue threonine 89 is modified to Phosphothreonine. Acidic residues-rich tracts occupy residues 103 to 118 and 173 to 242; these read ESEDDEEDDDEDDEFQ and EGED…EEQK. Position 184 is a phosphotyrosine; by CK2 (tyrosine 184). Serine 186 is modified (phosphoserine; by CK2). A compositionally biased stretch (basic residues) spans 251–260; the sequence is KSKKEKKRKH. Positions 256–271 match the Nuclear localization signal motif; the sequence is KKRKHEEKEEEKKAKK. Over residues 261–296 the composition is skewed to basic and acidic residues; that stretch reads EEKEEEKKAKKVKKVEFKKDLEEGPTKPKSKKEQDK. Residues 324–411 form the PPIase FKBP-type domain; that stretch reads GARVGMRYIG…FDVKLVSMKN (88 aa).

This sequence belongs to the FKBP-type PPIase family. FKBP3/4 subfamily. In terms of assembly, interacts with NOP53. In terms of processing, phosphorylated at tyrosine and dephosphorylated by the phosphotyrosine-specific phosphoprotein phosphatase PTP1.

The protein resides in the nucleus. The protein localises to the nucleolus. The catalysed reaction is [protein]-peptidylproline (omega=180) = [protein]-peptidylproline (omega=0). With respect to regulation, inhibited by both FK506 and rapamycin. Functionally, proline isomerase that belongs to an abundant class of enzymes that catalyze the cis-trans isomerization of X-Pro peptide bonds and can accelerate the refolding of proline-containing polypeptides. Specifically binds nuclear localization sequences. May be involved in the assembly or folding of ribosomal proteins. This chain is Peptidyl-prolyl cis-trans isomerase, found in Saccharomyces cerevisiae (strain ATCC 204508 / S288c) (Baker's yeast).